We begin with the raw amino-acid sequence, 623 residues long: Transketolase (623 aa).

Position 1 is an N-acetylmethionine (methionine 1). A Phosphoserine modification is found at serine 3. N6-acetyllysine is present on residues lysine 6 and lysine 11. A substrate-binding site is contributed by histidine 37. The thiamine diphosphate site is built by serine 40 and histidine 77. The residue at position 104 (serine 104) is a Phosphoserine. Position 123 to 125 (glycine 123 to leucine 125) interacts with thiamine diphosphate. At lysine 144 the chain carries N6-acetyllysine. Mg(2+) is bound at residue aspartate 155. Thiamine diphosphate-binding residues include glycine 156 and asparagine 185. The Mg(2+) site is built by asparagine 185 and leucine 187. N6-acetyllysine is present on residues lysine 204, lysine 232, and lysine 241. 2 residues coordinate thiamine diphosphate: lysine 244 and histidine 258. Histidine 258 is a binding site for substrate. Position 260 is an N6-acetyllysine (lysine 260). Phosphotyrosine is present on tyrosine 275. Threonine 287 is modified (phosphothreonine). Serine 295 carries the phosphoserine modification. Arginine 318 and serine 345 together coordinate substrate. The residue at position 345 (serine 345) is a Phosphoserine. Residue lysine 352 forms a Glycyl lysine isopeptide (Lys-Gly) (interchain with G-Cter in SUMO2) linkage. Glutamate 366 serves as the catalytic Proton donor. Phenylalanine 392 contributes to the thiamine diphosphate binding site. The substrate site is built by histidine 416 and aspartate 424. Glutamine 428 serves as a coordination point for thiamine diphosphate. Arginine 474 serves as a coordination point for substrate. 2 positions are modified to N6-acetyllysine: lysine 538 and lysine 603.

The protein belongs to the transketolase family. Homodimer. The cofactor is Mg(2+). Ca(2+) serves as cofactor. Mn(2+) is required as a cofactor. It depends on Co(2+) as a cofactor. Requires thiamine diphosphate as cofactor.

It catalyses the reaction D-sedoheptulose 7-phosphate + D-glyceraldehyde 3-phosphate = aldehydo-D-ribose 5-phosphate + D-xylulose 5-phosphate. Functionally, catalyzes the transfer of a two-carbon ketol group from a ketose donor to an aldose acceptor, via a covalent intermediate with the cofactor thiamine pyrophosphate. This chain is Transketolase (TKT), found in Homo sapiens (Human).